The primary structure comprises 295 residues: ATP synthase gamma chain (295 aa).

The protein belongs to the ATPase gamma chain family. In terms of assembly, F-type ATPases have 2 components, CF(1) - the catalytic core - and CF(0) - the membrane proton channel. CF(1) has five subunits: alpha(3), beta(3), gamma(1), delta(1), epsilon(1). CF(0) has three main subunits: a, b and c.

It is found in the cell inner membrane. Its function is as follows. Produces ATP from ADP in the presence of a proton gradient across the membrane. The gamma chain is believed to be important in regulating ATPase activity and the flow of protons through the CF(0) complex. The protein is ATP synthase gamma chain of Cytophaga hutchinsonii (strain ATCC 33406 / DSM 1761 / CIP 103989 / NBRC 15051 / NCIMB 9469 / D465).